Reading from the N-terminus, the 191-residue chain is Ribosome maturation factor RimM (191 aa).

The PRC barrel domain occupies 114–191 (EDEYYWVDLI…RIVVDWQPDY (78 aa)).

Belongs to the RimM family. As to quaternary structure, binds ribosomal protein uS19.

The protein resides in the cytoplasm. An accessory protein needed during the final step in the assembly of 30S ribosomal subunit, possibly for assembly of the head region. Essential for efficient processing of 16S rRNA. May be needed both before and after RbfA during the maturation of 16S rRNA. It has affinity for free ribosomal 30S subunits but not for 70S ribosomes. The protein is Ribosome maturation factor RimM of Paracidovorax citrulli (strain AAC00-1) (Acidovorax citrulli).